A 198-amino-acid polypeptide reads, in one-letter code: Protein RD3-like (198 aa).

A coiled-coil region spans residues 28 to 57; it reads KTLLRELKWHLKERERLIQEIENEQKVKKT. The tract at residues 133–168 is disordered; the sequence is GSEQEDLEDSGSMDCSAPSVIQGDSSKRADKDEIPT. Residues 157–166 show a composition bias toward basic and acidic residues; that stretch reads SSKRADKDEI.

This is Protein RD3-like (RD3L) from Homo sapiens (Human).